The chain runs to 132 residues: Global transcriptional regulator Spx (132 aa).

The cysteines at positions 10 and 13 are disulfide-linked.

It belongs to the ArsC family. Spx subfamily. As to quaternary structure, interacts with the C-terminal domain of the alpha subunit of the RNAP.

It is found in the cytoplasm. Its function is as follows. Global transcriptional regulator that plays a key role in stress response and exerts either positive or negative regulation of genes. Acts by interacting with the C-terminal domain of the alpha subunit of the RNA polymerase (RNAP). This interaction can enhance binding of RNAP to the promoter region of target genes and stimulate their transcription, or block interaction of RNAP with activator. The sequence is that of Global transcriptional regulator Spx from Lactiplantibacillus plantarum (strain ATCC BAA-793 / NCIMB 8826 / WCFS1) (Lactobacillus plantarum).